A 333-amino-acid polypeptide reads, in one-letter code: Cytochrome f (333 aa).

An N-terminal signal peptide occupies residues 1-16; it reads MRNVFRTARLTRSARA. Residues 17–36 form a helical membrane-spanning segment; the sequence is IVKTLLIAIATVTFYFTSDL. Heme-binding residues include Tyr45, Cys66, Cys69, and His70. A helical transmembrane segment spans residues 299 to 319; the sequence is VKWMIAFVALVMLAQVMLVLK.

The protein belongs to the cytochrome f family. In terms of assembly, the 4 large subunits of the cytochrome b6-f complex are cytochrome b6, subunit IV (17 kDa polypeptide, PetD), cytochrome f and the Rieske protein, while the 4 small subunits are PetG, PetL, PetM and PetN. The complex functions as a dimer. Heme serves as cofactor.

Its subcellular location is the cellular thylakoid membrane. Component of the cytochrome b6-f complex, which mediates electron transfer between photosystem II (PSII) and photosystem I (PSI), cyclic electron flow around PSI, and state transitions. This Nostoc punctiforme (strain ATCC 29133 / PCC 73102) protein is Cytochrome f.